A 544-amino-acid polypeptide reads, in one-letter code: MVAKNIKYNEEARKKIQKGVKTLAEAVKVTLGPKGRHVVIDKSFGSPQVTKDGVTVAKEVELADKHENMGAQMVKEVASKTADKAGDGTTTATVLAEAIYTEGLRNVTAGANPMDLKRGIDKAVKVVVDQIKKISKPVQHHKEIAQVATISANNDAEIGNLIAEAMEKVGKNGSITVEEAKGFETVLDVVEGMNFNRGYLSSYFATNPETQECVLEDALVLIYDKKISGIKDFLPILQQVAESGRPLLIIAEDIEGEALATLVVNRIRGGFRVCAVKAPGFGDRRKAMLEDIAILTGGQLISEELGMKLENANLAMLGKAKKVIVSKEDTTIVEGMGEKEALEARCESIKKQIEDSSSDYDKEKLQERLAKLSGGVAVIRVGAATEIEMKEKKDRVDDAQHATIAAVEEGILPGGGTALIRCIPTLEAFLPMLTNEDEQIGARIVLKALSAPLKQIAANAGKEGAIIFQQVMSRSANEGYDALRDAYTDMLEAGILDPAKVTRSALESAASVAGLLLTTEALIAEIPEEKPAAAPAMPGAGMDY.

Residues 30-33 (TLGP), lysine 51, 87-91 (DGTTT), glycine 415, 481-483 (DAL), and aspartate 497 each bind ATP.

This sequence belongs to the chaperonin (HSP60) family. Forms a cylinder of 14 subunits composed of two heptameric rings stacked back-to-back. Interacts with the co-chaperonin GroES.

The protein localises to the cytoplasm. The enzyme catalyses ATP + H2O + a folded polypeptide = ADP + phosphate + an unfolded polypeptide.. Together with its co-chaperonin GroES, plays an essential role in assisting protein folding. The GroEL-GroES system forms a nano-cage that allows encapsulation of the non-native substrate proteins and provides a physical environment optimized to promote and accelerate protein folding. The protein is Chaperonin GroEL of Chlamydia trachomatis serovar A (strain ATCC VR-571B / DSM 19440 / HAR-13).